Reading from the N-terminus, the 61-residue chain is Metallothionein-1A (61 aa).

The residue at position 1 (M1) is an N-acetylmethionine. The beta stretch occupies residues 1-29 (MDPNCSCATGGSCTCTGSCKCKECKCTSC). Positions 5, 7, 13, 15, 19, 21, 24, 26, 29, 33, 34, 36, 37, 41, 44, 48, 50, and 57 each coordinate a divalent metal cation. Residues 30–61 (KKSCCSCCPMSCAKCAQGCICKGASEKCSCCA) are alpha. Position 58 is a phosphoserine (S58). A divalent metal cation contacts are provided by C59 and C60.

The protein belongs to the metallothionein superfamily. Type 1 family. In terms of assembly, monomer.

Its function is as follows. Metallothioneins have a high content of cysteine residues that bind various heavy metals; these proteins are transcriptionally regulated by both heavy metals and glucocorticoids. In Homo sapiens (Human), this protein is Metallothionein-1A (MT1A).